The following is a 450-amino-acid chain: tRNA-2-methylthio-N(6)-dimethylallyladenosine synthase (450 aa).

Positions G14 to K132 constitute an MTTase N-terminal domain. Residues C23, C59, C93, C169, C173, and C176 each coordinate [4Fe-4S] cluster. The Radical SAM core domain maps to R155–K385. The region spanning K388–I450 is the TRAM domain.

The protein belongs to the methylthiotransferase family. MiaB subfamily. In terms of assembly, monomer. Requires [4Fe-4S] cluster as cofactor.

Its subcellular location is the cytoplasm. It carries out the reaction N(6)-dimethylallyladenosine(37) in tRNA + (sulfur carrier)-SH + AH2 + 2 S-adenosyl-L-methionine = 2-methylsulfanyl-N(6)-dimethylallyladenosine(37) in tRNA + (sulfur carrier)-H + 5'-deoxyadenosine + L-methionine + A + S-adenosyl-L-homocysteine + 2 H(+). Catalyzes the methylthiolation of N6-(dimethylallyl)adenosine (i(6)A), leading to the formation of 2-methylthio-N6-(dimethylallyl)adenosine (ms(2)i(6)A) at position 37 in tRNAs that read codons beginning with uridine. This Clostridium botulinum (strain Okra / Type B1) protein is tRNA-2-methylthio-N(6)-dimethylallyladenosine synthase.